A 960-amino-acid polypeptide reads, in one-letter code: UPF0182 protein DSY1630 (960 aa).

Helical transmembrane passes span 7–27 (IMLV…GLFE), 50–70 (IIQI…LFSI), 105–125 (TLWL…VTGF), 169–189 (FGPL…AGVI), 212–232 (LALL…FDTF), 256–276 (ALKA…LAFF), and 285–305 (LPIL…PMVL). Disordered stretches follow at residues 866 to 899 (SALA…QEDT) and 924 to 960 (TGDS…KTNP). The span at 881-897 (ETEETTEETEEPVDPQE) shows a compositional bias: acidic residues. The span at 931-944 (EGGKKADEDAHDVQ) shows a compositional bias: basic and acidic residues. The span at 950 to 960 (SVSSEQSKTNP) shows a compositional bias: polar residues.

This sequence belongs to the UPF0182 family.

It is found in the cell membrane. This chain is UPF0182 protein DSY1630, found in Desulfitobacterium hafniense (strain Y51).